Reading from the N-terminus, the 202-residue chain is NADH-quinone oxidoreductase subunit C (202 aa).

It belongs to the complex I 30 kDa subunit family. NDH-1 is composed of 14 different subunits. Subunits NuoB, C, D, E, F, and G constitute the peripheral sector of the complex.

It localises to the cell inner membrane. It catalyses the reaction a quinone + NADH + 5 H(+)(in) = a quinol + NAD(+) + 4 H(+)(out). In terms of biological role, NDH-1 shuttles electrons from NADH, via FMN and iron-sulfur (Fe-S) centers, to quinones in the respiratory chain. The immediate electron acceptor for the enzyme in this species is believed to be ubiquinone. Couples the redox reaction to proton translocation (for every two electrons transferred, four hydrogen ions are translocated across the cytoplasmic membrane), and thus conserves the redox energy in a proton gradient. The protein is NADH-quinone oxidoreductase subunit C of Albidiferax ferrireducens (strain ATCC BAA-621 / DSM 15236 / T118) (Rhodoferax ferrireducens).